The chain runs to 326 residues: Alkanal monooxygenase beta chain (326 aa).

This sequence belongs to the bacterial luciferase oxidoreductase family. Heterodimer of an alpha and a beta chain.

It catalyses the reaction a long-chain fatty aldehyde + FMNH2 + O2 = a long-chain fatty acid + hnu + FMN + H2O + 2 H(+). In terms of biological role, light-emitting reaction in luminous bacteria. The specific role of the beta subunit is unknown, but it is absolutely required for bioluminescence activity. In Aliivibrio fischeri (Vibrio fischeri), this protein is Alkanal monooxygenase beta chain (luxB).